The primary structure comprises 430 residues: Adenylosuccinate synthetase (430 aa).

GTP contacts are provided by residues 12 to 18 and 40 to 42; these read GDEGKGK and GHT. Asp13 serves as the catalytic Proton acceptor. Residues Asp13 and Gly40 each contribute to the Mg(2+) site. Residues 13–16, 38–41, Thr130, Arg144, Gln224, Thr239, and Arg303 each bind IMP; these read DEGK and NAGH. The active-site Proton donor is the His41. A substrate-binding site is contributed by 299-305; that stretch reads TNTGRAR. GTP is bound by residues Arg305, 331–333, and 413–415; these read KLD and STS.

The protein belongs to the adenylosuccinate synthetase family. Homodimer. The cofactor is Mg(2+).

The protein resides in the cytoplasm. It catalyses the reaction IMP + L-aspartate + GTP = N(6)-(1,2-dicarboxyethyl)-AMP + GDP + phosphate + 2 H(+). The protein operates within purine metabolism; AMP biosynthesis via de novo pathway; AMP from IMP: step 1/2. In terms of biological role, plays an important role in the de novo pathway of purine nucleotide biosynthesis. Catalyzes the first committed step in the biosynthesis of AMP from IMP. The chain is Adenylosuccinate synthetase from Hyphomonas neptunium (strain ATCC 15444).